The sequence spans 101 residues: Urease subunit beta (101 aa).

Belongs to the urease beta subunit family. In terms of assembly, heterotrimer of UreA (gamma), UreB (beta) and UreC (alpha) subunits. Three heterotrimers associate to form the active enzyme.

It localises to the cytoplasm. The enzyme catalyses urea + 2 H2O + H(+) = hydrogencarbonate + 2 NH4(+). The protein operates within nitrogen metabolism; urea degradation; CO(2) and NH(3) from urea (urease route): step 1/1. This Rhizobium etli (strain ATCC 51251 / DSM 11541 / JCM 21823 / NBRC 15573 / CFN 42) protein is Urease subunit beta.